A 304-amino-acid chain; its full sequence is Coenzyme PQQ synthesis protein B (304 aa).

It belongs to the PqqB family.

It functions in the pathway cofactor biosynthesis; pyrroloquinoline quinone biosynthesis. Its function is as follows. May be involved in the transport of PQQ or its precursor to the periplasm. The polypeptide is Coenzyme PQQ synthesis protein B (Gluconobacter oxydans (strain 621H) (Gluconobacter suboxydans)).